A 240-amino-acid chain; its full sequence is Pyridoxine 5'-phosphate synthase (240 aa).

Residue asparagine 7 coordinates 3-amino-2-oxopropyl phosphate. 9–10 (DH) is a 1-deoxy-D-xylulose 5-phosphate binding site. Arginine 18 serves as a coordination point for 3-amino-2-oxopropyl phosphate. The active-site Proton acceptor is the histidine 43. Positions 45 and 50 each coordinate 1-deoxy-D-xylulose 5-phosphate. Glutamate 70 acts as the Proton acceptor in catalysis. Threonine 100 lines the 1-deoxy-D-xylulose 5-phosphate pocket. Catalysis depends on histidine 191, which acts as the Proton donor. Residues glycine 192 and 213 to 214 (GH) contribute to the 3-amino-2-oxopropyl phosphate site.

Belongs to the PNP synthase family. As to quaternary structure, homooctamer; tetramer of dimers.

The protein resides in the cytoplasm. It catalyses the reaction 3-amino-2-oxopropyl phosphate + 1-deoxy-D-xylulose 5-phosphate = pyridoxine 5'-phosphate + phosphate + 2 H2O + H(+). It participates in cofactor biosynthesis; pyridoxine 5'-phosphate biosynthesis; pyridoxine 5'-phosphate from D-erythrose 4-phosphate: step 5/5. Catalyzes the complicated ring closure reaction between the two acyclic compounds 1-deoxy-D-xylulose-5-phosphate (DXP) and 3-amino-2-oxopropyl phosphate (1-amino-acetone-3-phosphate or AAP) to form pyridoxine 5'-phosphate (PNP) and inorganic phosphate. This chain is Pyridoxine 5'-phosphate synthase, found in Synechococcus elongatus (strain ATCC 33912 / PCC 7942 / FACHB-805) (Anacystis nidulans R2).